Reading from the N-terminus, the 606-residue chain is Probable methyltransferase PMT5 (606 aa).

At 1 to 20 (MRGSWYKSVSSVFGLRPRIR) the chain is on the cytoplasmic side. Residues 21–41 (GLLFFIVGVVALVTILAPLTS) traverse the membrane as a helical; Signal-anchor for type II membrane protein segment. Residues 42–606 (NSYDSSSSST…LVCQKPFIKK (565 aa)) lie on the Lumenal side of the membrane. 2 N-linked (GlcNAc...) asparagine glycosylation sites follow: N101 and N409.

Belongs to the methyltransferase superfamily.

It is found in the endoplasmic reticulum membrane. This chain is Probable methyltransferase PMT5, found in Arabidopsis thaliana (Mouse-ear cress).